The following is a 632-amino-acid chain: Probable potassium transport system protein Kup (632 aa).

The next 12 membrane-spanning stretches (helical) occupy residues 19–39, 57–77, 111–131, 147–167, 175–195, 213–233, 257–277, 286–306, 347–367, 376–396, 404–424, and 429–449; these read LLCL…PLYV, VIGI…LKYV, ILFL…VITP, PLLQ…LFML, IGAL…LVGL, AFAF…AVVL, WYGG…ALLL, PFFL…ATAA, IYIP…VLGF, AYGV…FFVL, FLLG…FFSA, and VAQG…IMIT.

It belongs to the HAK/KUP transporter (TC 2.A.72) family.

The protein resides in the cell inner membrane. The catalysed reaction is K(+)(in) + H(+)(in) = K(+)(out) + H(+)(out). Functionally, transport of potassium into the cell. Likely operates as a K(+):H(+) symporter. The chain is Probable potassium transport system protein Kup from Nitrosospira multiformis (strain ATCC 25196 / NCIMB 11849 / C 71).